A 108-amino-acid chain; its full sequence is Nucleoid-associated protein BH02310 (108 aa).

The protein belongs to the YbaB/EbfC family. Homodimer.

The protein localises to the cytoplasm. It is found in the nucleoid. Binds to DNA and alters its conformation. May be involved in regulation of gene expression, nucleoid organization and DNA protection. This Bartonella henselae (strain ATCC 49882 / DSM 28221 / CCUG 30454 / Houston 1) (Rochalimaea henselae) protein is Nucleoid-associated protein BH02310.